Here is a 283-residue protein sequence, read N- to C-terminus: Putative ABC transporter ATP-binding protein MA_4342 (283 aa).

The ABC transporter domain occupies 3–238 (IILENVSFFY…KNVPLPPVTS (236 aa)). 40–47 (GEKGAGKS) is an ATP binding site.

This sequence belongs to the ABC transporter superfamily.

Its subcellular location is the cell membrane. In terms of biological role, probably part of an ABC transporter complex. Responsible for energy coupling to the transport system. The chain is Putative ABC transporter ATP-binding protein MA_4342 from Methanosarcina acetivorans (strain ATCC 35395 / DSM 2834 / JCM 12185 / C2A).